Consider the following 109-residue polypeptide: Cell division protein ZapA (109 aa).

Residues proline 21–glutamine 97 are a coiled coil.

Belongs to the ZapA family. Type 1 subfamily. In terms of assembly, homodimer. Interacts with FtsZ.

The protein localises to the cytoplasm. Functionally, activator of cell division through the inhibition of FtsZ GTPase activity, therefore promoting FtsZ assembly into bundles of protofilaments necessary for the formation of the division Z ring. It is recruited early at mid-cell but it is not essential for cell division. This Sodalis glossinidius (strain morsitans) protein is Cell division protein ZapA.